A 70-amino-acid polypeptide reads, in one-letter code: Brevinin-1PLb (70 aa).

A signal peptide spans 1-22; the sequence is MFTTKKSMLLLFFLGTINLSLC. The propeptide occupies 23–44; that stretch reads EEERNAEEERRDEPDEMNVEVE. Residues C64 and C70 are joined by a disulfide bond.

Expressed by the skin glands.

It is found in the secreted. Antimicrobial activity against the Gram-negative bacterium E.coli, the Gram-positive bacterium S.aureus and the yeast C.albicans. This Lithobates palustris (Pickerel frog) protein is Brevinin-1PLb.